A 157-amino-acid chain; its full sequence is 6,7-dimethyl-8-ribityllumazine synthase (157 aa).

Residues Phe-24, Ser-58 to Glu-60, and Ala-82 to Ile-84 each bind 5-amino-6-(D-ribitylamino)uracil. Glu-87–Thr-88 contributes to the (2S)-2-hydroxy-3-oxobutyl phosphate binding site. His-90 serves as the catalytic Proton donor. Phe-115 provides a ligand contact to 5-amino-6-(D-ribitylamino)uracil. Arg-129 provides a ligand contact to (2S)-2-hydroxy-3-oxobutyl phosphate.

This sequence belongs to the DMRL synthase family.

The catalysed reaction is (2S)-2-hydroxy-3-oxobutyl phosphate + 5-amino-6-(D-ribitylamino)uracil = 6,7-dimethyl-8-(1-D-ribityl)lumazine + phosphate + 2 H2O + H(+). Its pathway is cofactor biosynthesis; riboflavin biosynthesis; riboflavin from 2-hydroxy-3-oxobutyl phosphate and 5-amino-6-(D-ribitylamino)uracil: step 1/2. Its function is as follows. Catalyzes the formation of 6,7-dimethyl-8-ribityllumazine by condensation of 5-amino-6-(D-ribitylamino)uracil with 3,4-dihydroxy-2-butanone 4-phosphate. This is the penultimate step in the biosynthesis of riboflavin. This is 6,7-dimethyl-8-ribityllumazine synthase from Thermus thermophilus (strain ATCC BAA-163 / DSM 7039 / HB27).